The chain runs to 518 residues: 2-isopropylmalate synthase (518 aa).

The Pyruvate carboxyltransferase domain occupies 5–267 (VIIFDTTLRD…STKIKHKEIY (263 aa)). The Mn(2+) site is built by Asp14, His202, His204, and Asn238. A regulatory domain region spans residues 392 to 518 (SLSFFSVQSI…KLKKLKKINN (127 aa)).

It belongs to the alpha-IPM synthase/homocitrate synthase family. LeuA type 1 subfamily. As to quaternary structure, homodimer. Requires Mn(2+) as cofactor.

It localises to the cytoplasm. The enzyme catalyses 3-methyl-2-oxobutanoate + acetyl-CoA + H2O = (2S)-2-isopropylmalate + CoA + H(+). It participates in amino-acid biosynthesis; L-leucine biosynthesis; L-leucine from 3-methyl-2-oxobutanoate: step 1/4. Functionally, catalyzes the condensation of the acetyl group of acetyl-CoA with 3-methyl-2-oxobutanoate (2-ketoisovalerate) to form 3-carboxy-3-hydroxy-4-methylpentanoate (2-isopropylmalate). The protein is 2-isopropylmalate synthase of Buchnera aphidicola subsp. Rhopalosiphum padi.